A 469-amino-acid polypeptide reads, in one-letter code: UDP-N-acetylmuramoylalanine--D-glutamate ligase (469 aa).

123–129 (GTNGKST) provides a ligand contact to ATP.

The protein belongs to the MurCDEF family.

It is found in the cytoplasm. The enzyme catalyses UDP-N-acetyl-alpha-D-muramoyl-L-alanine + D-glutamate + ATP = UDP-N-acetyl-alpha-D-muramoyl-L-alanyl-D-glutamate + ADP + phosphate + H(+). It participates in cell wall biogenesis; peptidoglycan biosynthesis. In terms of biological role, cell wall formation. Catalyzes the addition of glutamate to the nucleotide precursor UDP-N-acetylmuramoyl-L-alanine (UMA). This chain is UDP-N-acetylmuramoylalanine--D-glutamate ligase, found in Phenylobacterium zucineum (strain HLK1).